The sequence spans 286 residues: Pantothenate synthetase (286 aa).

30-37 is an ATP binding site; that stretch reads MGALHEGH. His37 functions as the Proton donor in the catalytic mechanism. Gln61 is a (R)-pantoate binding site. Gln61 is a beta-alanine binding site. 147–150 contacts ATP; sequence GEKD. Gln153 is a binding site for (R)-pantoate. Residues Val180 and 188–191 contribute to the ATP site; that span reads LSSR.

It belongs to the pantothenate synthetase family. As to quaternary structure, homodimer.

It localises to the cytoplasm. It carries out the reaction (R)-pantoate + beta-alanine + ATP = (R)-pantothenate + AMP + diphosphate + H(+). It participates in cofactor biosynthesis; (R)-pantothenate biosynthesis; (R)-pantothenate from (R)-pantoate and beta-alanine: step 1/1. In terms of biological role, catalyzes the condensation of pantoate with beta-alanine in an ATP-dependent reaction via a pantoyl-adenylate intermediate. The polypeptide is Pantothenate synthetase (Novosphingobium aromaticivorans (strain ATCC 700278 / DSM 12444 / CCUG 56034 / CIP 105152 / NBRC 16084 / F199)).